The following is a 932-amino-acid chain: Eukaryotic translation initiation factor 3 subunit A (932 aa).

One can recognise a PCI domain in the interval 309 to 492 (KPATANFVIL…NSISFSSDLF (184 aa)). Serine 374 and serine 501 each carry phosphoserine. Residues 537 to 862 (LRKQQAEAAY…DEEISRKLAE (326 aa)) adopt a coiled-coil conformation. Basic and acidic residues predominate over residues 793-865 (AEEEAARAAE…ISRKLAEKAA (73 aa)). The segment at 793–932 (AEEEAARAAE…PPSRRNQQQQ (140 aa)) is disordered. Phosphoserine occurs at positions 874, 875, and 877. Low complexity predominate over residues 877-893 (SPGAWRRGGASAGGVSR).

Belongs to the eIF-3 subunit A family. As to quaternary structure, component of the eukaryotic translation initiation factor 3 (eIF-3) complex. The eIF-3 complex appears to include tif32/eif3a, SPAC25G10.08/eif3b, tif33/eif3c, SPBC4C3.07/eif3f, tif35/eif3g and sum1/eif3i. This set of common subunits may also associate exclusively with either moe1/eif3d and int6/eif3e, or with SPAC821.05/eif3h and SPAC1751.03/eif3m. The eIF-3 complex may also include SPAC3A12.13c/eif3j.

The protein localises to the cytoplasm. RNA-binding component of the eukaryotic translation initiation factor 3 (eIF-3) complex, which is involved in protein synthesis of a specialized repertoire of mRNAs and, together with other initiation factors, stimulates binding of mRNA and methionyl-tRNAi to the 40S ribosome. The eIF-3 complex specifically targets and initiates translation of a subset of mRNAs involved in cell proliferation. This is Eukaryotic translation initiation factor 3 subunit A (tif32) from Schizosaccharomyces pombe (strain 972 / ATCC 24843) (Fission yeast).